The primary structure comprises 267 residues: 5'-nucleotidase SurE (267 aa).

The a divalent metal cation site is built by aspartate 9, aspartate 10, serine 40, and asparagine 97.

The protein belongs to the SurE nucleotidase family. A divalent metal cation is required as a cofactor.

It localises to the cytoplasm. The catalysed reaction is a ribonucleoside 5'-phosphate + H2O = a ribonucleoside + phosphate. Nucleotidase that shows phosphatase activity on nucleoside 5'-monophosphates. The sequence is that of 5'-nucleotidase SurE from Helicobacter pylori (strain Shi470).